Reading from the N-terminus, the 466-residue chain is UDP-N-acetylmuramate--L-alanine ligase (466 aa).

114-120 (GTHGKTT) is an ATP binding site.

This sequence belongs to the MurCDEF family.

The protein localises to the cytoplasm. The catalysed reaction is UDP-N-acetyl-alpha-D-muramate + L-alanine + ATP = UDP-N-acetyl-alpha-D-muramoyl-L-alanine + ADP + phosphate + H(+). It functions in the pathway cell wall biogenesis; peptidoglycan biosynthesis. Functionally, cell wall formation. This chain is UDP-N-acetylmuramate--L-alanine ligase, found in Mesorhizobium japonicum (strain LMG 29417 / CECT 9101 / MAFF 303099) (Mesorhizobium loti (strain MAFF 303099)).